A 530-amino-acid chain; its full sequence is Glutamate--cysteine ligase (530 aa).

It belongs to the glutamate--cysteine ligase type 1 family. Type 1 subfamily.

The enzyme catalyses L-cysteine + L-glutamate + ATP = gamma-L-glutamyl-L-cysteine + ADP + phosphate + H(+). It functions in the pathway sulfur metabolism; glutathione biosynthesis; glutathione from L-cysteine and L-glutamate: step 1/2. The chain is Glutamate--cysteine ligase from Saccharophagus degradans (strain 2-40 / ATCC 43961 / DSM 17024).